A 541-amino-acid polypeptide reads, in one-letter code: Apolipoprotein N-acyltransferase (541 aa).

6 helical membrane-spanning segments follow: residues 21 to 41 (MSWF…WYSL), 54 to 74 (LTSL…SWML), 89 to 109 (VLIS…FFIV), 116 to 136 (ILWC…YFLC), 157 to 177 (FGGF…GISF), and 189 to 209 (YVWL…YEYL). Residues 219–500 (LRVAVIQPAS…PGVLQVSLPM (282 aa)) enclose the CN hydrolase domain. Residue E265 is the Proton acceptor of the active site. K350 is an active-site residue. Catalysis depends on C405, which acts as the Nucleophile. The helical transmembrane segment at 506-526 (LYAFWGDFPMIFLSLLSIGCI) threads the bilayer.

Belongs to the CN hydrolase family. Apolipoprotein N-acyltransferase subfamily.

It is found in the cell inner membrane. It carries out the reaction N-terminal S-1,2-diacyl-sn-glyceryl-L-cysteinyl-[lipoprotein] + a glycerophospholipid = N-acyl-S-1,2-diacyl-sn-glyceryl-L-cysteinyl-[lipoprotein] + a 2-acyl-sn-glycero-3-phospholipid + H(+). It functions in the pathway protein modification; lipoprotein biosynthesis (N-acyl transfer). Its function is as follows. Catalyzes the phospholipid dependent N-acylation of the N-terminal cysteine of apolipoprotein, the last step in lipoprotein maturation. The chain is Apolipoprotein N-acyltransferase from Chlamydia caviae (strain ATCC VR-813 / DSM 19441 / 03DC25 / GPIC) (Chlamydophila caviae).